A 190-amino-acid polypeptide reads, in one-letter code: LIM domain-containing protein WLIM1 (190 aa).

An N-acetylalanine modification is found at Ala-2. In terms of domain architecture, LIM zinc-binding 1 spans 8-68; it reads QKCMACDKTV…RPHFDQNFKR (61 aa). Positions 74 to 98 are disordered; that stretch reads KSFEGTPKIGKPDRPLEGERPAGTK. A compositionally biased stretch (basic and acidic residues) spans 83–95; that stretch reads GKPDRPLEGERPA. Residues 108–168 enclose the LIM zinc-binding 2 domain; the sequence is EKCVGCDKTV…KHHHIQLIKE (61 aa).

Interacts with F-actin. In terms of tissue distribution, expressed in roots, leaves, stems, flowers and siliques. Not detected in pollen.

It is found in the cytoplasm. Its subcellular location is the cytoskeleton. In terms of biological role, binds to actin filaments and promotes cross-linking into thick bundles. Has an actin-stabilizing activity. The actin regulatory activities are not regulated by pH and [Ca(2+)]. The chain is LIM domain-containing protein WLIM1 from Arabidopsis thaliana (Mouse-ear cress).